Reading from the N-terminus, the 66-residue chain is Large ribosomal subunit protein uL29 (66 aa).

It belongs to the universal ribosomal protein uL29 family.

In Thermotoga sp. (strain RQ2), this protein is Large ribosomal subunit protein uL29.